Consider the following 24-residue polypeptide: Humanin-like 6 (24 aa).

It belongs to the humanin family. As to expression, expressed in skeletal muscle and testis.

The protein resides in the secreted. It localises to the cytoplasm. Its function is as follows. Plays a role as a neuroprotective and antiapoptotic factor. The polypeptide is Humanin-like 6 (Homo sapiens (Human)).